Consider the following 140-residue polypeptide: MSVERTLMLVKPDAVRRNLEGKIIAHVQEKGFKLVALKKLKLTKEQAQQFYIVHKDRPFYDELCEFMSSGPIVAMVWEGENAISRIREIMGATNPEEAEEGTLRKLYGTNVGENAVHGSDSPESAKVEIPFFFSRLEIVE.

Residues K11, F59, R87, T93, R104, and N114 each contribute to the ATP site. H117 serves as the catalytic Pros-phosphohistidine intermediate.

It belongs to the NDK family. As to quaternary structure, homotetramer. Mg(2+) serves as cofactor.

It is found in the cytoplasm. The enzyme catalyses a 2'-deoxyribonucleoside 5'-diphosphate + ATP = a 2'-deoxyribonucleoside 5'-triphosphate + ADP. The catalysed reaction is a ribonucleoside 5'-diphosphate + ATP = a ribonucleoside 5'-triphosphate + ADP. Its function is as follows. Major role in the synthesis of nucleoside triphosphates other than ATP. The ATP gamma phosphate is transferred to the NDP beta phosphate via a ping-pong mechanism, using a phosphorylated active-site intermediate. This is Nucleoside diphosphate kinase from Persephonella marina (strain DSM 14350 / EX-H1).